Consider the following 212-residue polypeptide: MTPAPPFLQATALACERDWRVLFENLDLHLCAGDMLQVSGPNGSGKTSLLRLLCGLMQPTAGQVLLNGQVLGRQRAPGCDLLWLGHAPALKDLLTPLENLAWLCALHQPAGADAIGHALNAVGLAGFEDVPCHTLSAGQQRRVALARLHLPGPSLWILDEPFTALDQQGIAQLENHLADHCEQGGMVVITTHHTLSRLPAGYRSIDLAKGSA.

The region spanning 8–212 (LQATALACER…RSIDLAKGSA (205 aa)) is the ABC transporter domain. 40-47 (GPNGSGKT) is an ATP binding site.

Belongs to the ABC transporter superfamily. CcmA exporter (TC 3.A.1.107) family. In terms of assembly, the complex is composed of two ATP-binding proteins (CcmA) and two transmembrane proteins (CcmB).

It is found in the cell inner membrane. It catalyses the reaction heme b(in) + ATP + H2O = heme b(out) + ADP + phosphate + H(+). Functionally, part of the ABC transporter complex CcmAB involved in the biogenesis of c-type cytochromes; once thought to export heme, this seems not to be the case, but its exact role is uncertain. Responsible for energy coupling to the transport system. The protein is Cytochrome c biogenesis ATP-binding export protein CcmA of Pseudomonas syringae pv. tomato (strain ATCC BAA-871 / DC3000).